The sequence spans 394 residues: Elongation factor Tu (394 aa).

In terms of domain architecture, tr-type G spans 10–204 (KPHVNIGTIG…AVDSYIPQPI (195 aa)). Positions 19–26 (GHVDHGKT) are G1. 19–26 (GHVDHGKT) is a binding site for GTP. Residue Thr26 participates in Mg(2+) binding. The tract at residues 60–64 (GITIS) is G2. The interval 81-84 (DCPG) is G3. GTP-binding positions include 81 to 85 (DCPGH) and 136 to 139 (NKVD). Residues 136–139 (NKVD) are G4. Residues 174-176 (SAL) are G5.

Belongs to the TRAFAC class translation factor GTPase superfamily. Classic translation factor GTPase family. EF-Tu/EF-1A subfamily. In terms of assembly, monomer.

Its subcellular location is the cytoplasm. It carries out the reaction GTP + H2O = GDP + phosphate + H(+). In terms of biological role, GTP hydrolase that promotes the GTP-dependent binding of aminoacyl-tRNA to the A-site of ribosomes during protein biosynthesis. The protein is Elongation factor Tu of Rickettsia typhi (strain ATCC VR-144 / Wilmington).